A 605-amino-acid polypeptide reads, in one-letter code: Alpha-1,3-galactosidase B (605 aa).

The signal sequence occupies residues 1 to 19 (MKRIIFNFCFVWLAVSAFA). PbH1 repeat units lie at residues 428–450 (CPEVYFADNVIRNNRARGTLFST), 451–473 (PLKTVVERNLFDHTSGTAILLCG), and 484–538 (CRNV…VIED).

Belongs to the glycosyl hydrolase 110 family. B subfamily.

It carries out the reaction Hydrolysis of terminal, non-reducing branched (1-&gt;3)-alpha-D-galactosidic residues, producing free D-galactose.. It catalyses the reaction Hydrolysis of terminal, non-reducing linear (1-&gt;3)-alpha-D-galactosidic residues, producing free D-galactose.. The enzyme catalyses Hydrolysis of terminal, non-reducing alpha-D-galactose residues in alpha-D-galactosides, including galactose oligosaccharides, galactomannans and galactolipids.. Functionally, alpha-galactosidase. Removes both branched alpha-1,3-linked galactose residues of blood group B antigens and linear alpha-1,3-linked galactose structures. In Phocaeicola vulgatus (strain ATCC 8482 / DSM 1447 / JCM 5826 / CCUG 4940 / NBRC 14291 / NCTC 11154) (Bacteroides vulgatus), this protein is Alpha-1,3-galactosidase B (glaB2).